We begin with the raw amino-acid sequence, 362 residues long: Nicotinate-nucleotide--dimethylbenzimidazole phosphoribosyltransferase (362 aa).

The active-site Proton acceptor is Glu321.

The protein belongs to the CobT family.

It carries out the reaction 5,6-dimethylbenzimidazole + nicotinate beta-D-ribonucleotide = alpha-ribazole 5'-phosphate + nicotinate + H(+). It functions in the pathway nucleoside biosynthesis; alpha-ribazole biosynthesis; alpha-ribazole from 5,6-dimethylbenzimidazole: step 1/2. Catalyzes the synthesis of alpha-ribazole-5'-phosphate from nicotinate mononucleotide (NAMN) and 5,6-dimethylbenzimidazole (DMB). The protein is Nicotinate-nucleotide--dimethylbenzimidazole phosphoribosyltransferase of Clostridium tetani (strain Massachusetts / E88).